We begin with the raw amino-acid sequence, 237 residues long: Large ribosomal subunit protein uL1 (237 aa).

Belongs to the universal ribosomal protein uL1 family. In terms of assembly, part of the 50S ribosomal subunit.

In terms of biological role, binds directly to 23S rRNA. The L1 stalk is quite mobile in the ribosome, and is involved in E site tRNA release. Functionally, protein L1 is also a translational repressor protein, it controls the translation of the L11 operon by binding to its mRNA. The polypeptide is Large ribosomal subunit protein uL1 (Chloroflexus aurantiacus (strain ATCC 29364 / DSM 637 / Y-400-fl)).